A 504-amino-acid chain; its full sequence is Peroxisomal N(1)-acetyl-spermine/spermidine oxidase (504 aa).

Residues Ala16, Glu37, Arg45, and 61 to 62 (HW) contribute to the FAD site. Positions 64 and 187 each coordinate substrate. Val240 is a binding site for FAD. Substrate is bound at residue Asn313. FAD-binding positions include Glu465 and 474 to 475 (TT). The Microbody targeting signal signature appears at 502–504 (PRL).

This sequence belongs to the flavin monoamine oxidase family. As to quaternary structure, monomer. FAD is required as a cofactor. In terms of tissue distribution, widely expressed at different developmental stages. Expressed at high level in the liver and the stomach, expressed at lower level in heart, spleen, thymus, small intestine, muscle, pancreas, uterus, and breast and expressed at very low level in brain, kidney, lung, testis, skin, adrenal gland and prostate gland.

Its subcellular location is the peroxisome. The protein resides in the cytoplasm. The enzyme catalyses N(1)-acetylspermine + O2 + H2O = 3-acetamidopropanal + spermidine + H2O2. The catalysed reaction is N(1)-acetylspermidine + O2 + H2O = 3-acetamidopropanal + putrescine + H2O2. It catalyses the reaction N(1),N(12)-diacetylspermine + O2 + H2O = 3-acetamidopropanal + N(1)-acetylspermidine + H2O2. It participates in amine and polyamine metabolism; spermine metabolism. Functionally, flavoenzyme which catalyzes the oxidation of N(1)-acetylspermine to spermidine and is thus involved in the polyamine back-conversion. Can also oxidize N(1)-acetylspermidine to putrescine. Substrate specificity: N(1)-acetylspermine = N(1)-acetylspermidine &gt; N(1),N(12)-diacylspermine &gt;&gt; spermine. Does not oxidize spermidine. Plays an important role in the regulation of polyamine intracellular concentration and has the potential to act as a determinant of cellular sensitivity to the antitumor polyamine analogs. The protein is Peroxisomal N(1)-acetyl-spermine/spermidine oxidase (Paox) of Mus musculus (Mouse).